The following is a 1043-amino-acid chain: NACHT, LRR and PYD domains-containing protein 13 (1043 aa).

One can recognise a Pyrin domain in the interval 1-107 (MNFSVITCPN…CEKVRAEMKE (107 aa)). The NACHT domain maps to 229-558 (QTIVLVGRAG…VLEEPREFPP (330 aa)). 235 to 242 (GRAGVGKT) provides a ligand contact to ATP. 7 LRR repeats span residues 725-749 (NENLHELDLSNSKLHASSVKGLCLA), 781-804 (NSKLTHLNFSSNKLGMTVPLILKA), 837-864 (IQHVTRLCLGFNRLQDDGIKLLCAALTH), 894-917 (NRSLTHLNLSKNSLRDEGVKFLCE), 923-946 (DGNLQSLNLSGCSFTREGCGELAN), 951-978 (NHNVKILDLGENDLQDDGVKLLCEALKP), and 1007-1030 (SKSLVNLNLLGNELDTDGVKMLCK).

It belongs to the NLRP family.

Its function is as follows. Involved in inflammation. This chain is NACHT, LRR and PYD domains-containing protein 13 (NLRP13), found in Homo sapiens (Human).